Reading from the N-terminus, the 282-residue chain is Pantothenate synthetase (282 aa).

Position 26–33 (26–33) interacts with ATP; it reads MGNLHEGH. The active-site Proton donor is the His-33. Gln-57 contributes to the (R)-pantoate binding site. Gln-57 lines the beta-alanine pocket. 144-147 serves as a coordination point for ATP; sequence GKKD. Gln-150 serves as a coordination point for (R)-pantoate. Residues Val-173 and 181-184 contribute to the ATP site; that span reads LSSR.

The protein belongs to the pantothenate synthetase family. In terms of assembly, homodimer.

The protein localises to the cytoplasm. It catalyses the reaction (R)-pantoate + beta-alanine + ATP = (R)-pantothenate + AMP + diphosphate + H(+). The protein operates within cofactor biosynthesis; (R)-pantothenate biosynthesis; (R)-pantothenate from (R)-pantoate and beta-alanine: step 1/1. In terms of biological role, catalyzes the condensation of pantoate with beta-alanine in an ATP-dependent reaction via a pantoyl-adenylate intermediate. The chain is Pantothenate synthetase from Cupriavidus taiwanensis (strain DSM 17343 / BCRC 17206 / CCUG 44338 / CIP 107171 / LMG 19424 / R1) (Ralstonia taiwanensis (strain LMG 19424)).